Here is a 500-residue protein sequence, read N- to C-terminus: Bifunctional protein GlmU (500 aa).

The pyrophosphorylase stretch occupies residues 1-242 (MPVQTAVVVL…SAKVAGANDR (242 aa)). UDP-N-acetyl-alpha-D-glucosamine-binding positions include 10–13 (LAAG), Lys24, Gln81, and 86–87 (GT). Asp112 serves as a coordination point for Mg(2+). The UDP-N-acetyl-alpha-D-glucosamine site is built by Gly151, Glu167, Asn182, and Asn240. Residue Asn240 participates in Mg(2+) binding. Positions 243 to 263 (VQLSRLAAELNRRTVENWMRA) are linker. The segment at 264–500 (GVTVVDPSTT…KQDLKDGIEQ (237 aa)) is N-acetyltransferase. UDP-N-acetyl-alpha-D-glucosamine-binding residues include Arg345 and Lys363. His375 acts as the Proton acceptor in catalysis. UDP-N-acetyl-alpha-D-glucosamine is bound by residues Tyr378 and Asn389. Residues Ala392, 398-399 (NY), Ser417, and Ala435 contribute to the acetyl-CoA site. Residues 472 to 500 (AEAAAAAGLHHSSDLHETEKQDLKDGIEQ) form a disordered region. A compositionally biased stretch (basic and acidic residues) spans 482 to 500 (HSSDLHETEKQDLKDGIEQ).

The protein in the N-terminal section; belongs to the N-acetylglucosamine-1-phosphate uridyltransferase family. In the C-terminal section; belongs to the transferase hexapeptide repeat family. In terms of assembly, homotrimer. It depends on Mg(2+) as a cofactor.

The protein resides in the cytoplasm. It catalyses the reaction alpha-D-glucosamine 1-phosphate + acetyl-CoA = N-acetyl-alpha-D-glucosamine 1-phosphate + CoA + H(+). The catalysed reaction is N-acetyl-alpha-D-glucosamine 1-phosphate + UTP + H(+) = UDP-N-acetyl-alpha-D-glucosamine + diphosphate. The protein operates within nucleotide-sugar biosynthesis; UDP-N-acetyl-alpha-D-glucosamine biosynthesis; N-acetyl-alpha-D-glucosamine 1-phosphate from alpha-D-glucosamine 6-phosphate (route II): step 2/2. Its pathway is nucleotide-sugar biosynthesis; UDP-N-acetyl-alpha-D-glucosamine biosynthesis; UDP-N-acetyl-alpha-D-glucosamine from N-acetyl-alpha-D-glucosamine 1-phosphate: step 1/1. It functions in the pathway bacterial outer membrane biogenesis; LPS lipid A biosynthesis. Functionally, catalyzes the last two sequential reactions in the de novo biosynthetic pathway for UDP-N-acetylglucosamine (UDP-GlcNAc). The C-terminal domain catalyzes the transfer of acetyl group from acetyl coenzyme A to glucosamine-1-phosphate (GlcN-1-P) to produce N-acetylglucosamine-1-phosphate (GlcNAc-1-P), which is converted into UDP-GlcNAc by the transfer of uridine 5-monophosphate (from uridine 5-triphosphate), a reaction catalyzed by the N-terminal domain. This chain is Bifunctional protein GlmU, found in Rhodococcus jostii (strain RHA1).